The sequence spans 132 residues: Ribosome-binding factor A (132 aa).

It belongs to the RbfA family. Monomer. Binds 30S ribosomal subunits, but not 50S ribosomal subunits or 70S ribosomes.

The protein localises to the cytoplasm. One of several proteins that assist in the late maturation steps of the functional core of the 30S ribosomal subunit. Associates with free 30S ribosomal subunits (but not with 30S subunits that are part of 70S ribosomes or polysomes). Required for efficient processing of 16S rRNA. May interact with the 5'-terminal helix region of 16S rRNA. This chain is Ribosome-binding factor A, found in Pectobacterium atrosepticum (strain SCRI 1043 / ATCC BAA-672) (Erwinia carotovora subsp. atroseptica).